The sequence spans 368 residues: Cobalt-precorrin-5B C(1)-methyltransferase (368 aa).

The protein belongs to the CbiD family.

The catalysed reaction is Co-precorrin-5B + S-adenosyl-L-methionine = Co-precorrin-6A + S-adenosyl-L-homocysteine. Its pathway is cofactor biosynthesis; adenosylcobalamin biosynthesis; cob(II)yrinate a,c-diamide from sirohydrochlorin (anaerobic route): step 6/10. In terms of biological role, catalyzes the methylation of C-1 in cobalt-precorrin-5B to form cobalt-precorrin-6A. The polypeptide is Cobalt-precorrin-5B C(1)-methyltransferase (Brucella ovis (strain ATCC 25840 / 63/290 / NCTC 10512)).